The primary structure comprises 406 residues: NIPA-like protein 3 (406 aa).

The next 4 membrane-spanning stretches (helical) occupy residues 33–53 (NLIG…ALNL), 76–96 (WWLG…SYAF), 101–121 (LIVP…IIFI), and 135–155 (ILSF…VTFA). Residue N166 is glycosylated (N-linked (GlcNAc...) asparagine). The next 5 membrane-spanning stretches (helical) occupy residues 171 to 191 (LVSW…CLLL), 202 to 222 (IVVI…TVKA), 240 to 260 (PIFY…AAFL), 271 to 291 (LIAS…GAIF), and 300 to 320 (VLHI…VFLI). The residue at position 372 (S372) is a Phosphoserine.

Belongs to the NIPA family.

The protein localises to the membrane. This chain is NIPA-like protein 3 (NIPAL3), found in Pongo abelii (Sumatran orangutan).